Here is a 435-residue protein sequence, read N- to C-terminus: Legumain (435 aa).

The first 17 residues, Met-1–Ala-17, serve as a signal peptide directing secretion. Asn-93 carries N-linked (GlcNAc...) asparagine glycosylation. His-150 is an active-site residue. An N-linked (GlcNAc...) asparagine glycan is attached at Asn-169. The Nucleophile role is filled by Cys-191. Residues Asn-215, Asn-265, and Asn-274 are each glycosylated (N-linked (GlcNAc...) asparagine). Positions Asn-326–Tyr-435 are excised as a propeptide. 2 cysteine pairs are disulfide-bonded: Cys-380-Cys-414 and Cys-392-Cys-431.

Belongs to the peptidase C13 family. As to quaternary structure, homodimer before autocatalytic removal of the propeptide. Monomer after autocatalytic processing. May interact with integrins. Post-translationally, activated by autocatalytic processing at pH 4. As to expression, detected in kidney cortex (at protein level).

It is found in the lysosome. The catalysed reaction is Hydrolysis of proteins and small molecule substrates at -Asn-|-Xaa- bonds.. Its function is as follows. Has a strict specificity for hydrolysis of asparaginyl bonds. Can also cleave aspartyl bonds slowly, especially under acidic conditions. Involved in the processing of proteins for MHC class II antigen presentation in the lysosomal/endosomal system. Also involved in MHC class I antigen presentation in cross-presenting dendritic cells by mediating cleavage and maturation of Perforin-2 (MPEG1), thereby promoting antigen translocation in the cytosol. Required for normal lysosomal protein degradation in renal proximal tubules. Required for normal degradation of internalized EGFR. Plays a role in the regulation of cell proliferation via its role in EGFR degradation. The sequence is that of Legumain (Lgmn) from Rattus norvegicus (Rat).